A 1499-amino-acid polypeptide reads, in one-letter code: B-cell CLL/lymphoma 9-like protein (1499 aa).

2 disordered regions span residues 1-238 (MRIL…PPSQ) and 271-500 (VPRA…MGQQ). Positions 20–37 (GSPPLSPRGHCPPAPAKP) are enriched in pro residues. Phosphoserine is present on residues Ser-21 and Ser-25. Residue Lys-36 is modified to N6-acetyllysine. Composition is skewed to polar residues over residues 45–70 (TNHG…TCNV) and 85–96 (NQISPSNSSLKN). Residue Ser-88 is modified to Phosphoserine. N6-acetyllysine is present on residues Lys-108 and Lys-110. Basic and acidic residues-rich tracts occupy residues 114–126 (DRSV…EQRE) and 134–153 (SEAK…ERKQ). Residues Ser-116 and Ser-118 each carry the phosphoserine modification. Residue Lys-137 is modified to N6-acetyllysine. A compositionally biased stretch (polar residues) spans 193-205 (PGQTTQLPLSESS). The segment covering 222–232 (PGGGGGGGGVP) has biased composition (gly residues). Composition is skewed to pro residues over residues 281–291 (KVPPTPEPLPL) and 301–325 (SQPP…PPEG). The interval 304–533 (PPLPPPPPPA…QEEYYEEKRR (230 aa)) is necessary for interaction with CTNNB1. 2 stretches are compositionally biased toward low complexity: residues 351-363 (THPN…TANN) and 370-387 (DPSS…AAPG). Residues 399–421 (LSKEQLEHRERSLQTLRDIERLL) show a composition bias toward basic and acidic residues. Ser-424 is modified (phosphoserine). Residues 445-458 (AQAPPPPQQPPTAP) show a composition bias toward pro residues. Thr-514 is modified (phosphothreonine). Arg-680 carries the post-translational modification Asymmetric dimethylarginine. Ser-750, Ser-813, Ser-915, Ser-926, Ser-938, Ser-942, Ser-947, Ser-975, Ser-987, Ser-991, Ser-997, Ser-1004, Ser-1010, and Ser-1017 each carry phosphoserine. Disordered stretches follow at residues 888–1084 (SHMP…QNPL) and 1116–1201 (ELLP…PQNS). The span at 935–960 (PTLSQVHSPLVTSPSANLKSPQTPSQ) shows a compositional bias: polar residues. The segment covering 978 to 996 (VLGSSLSVRSPTGSPSRLK) has biased composition (polar residues). 2 stretches are compositionally biased toward polar residues: residues 1019 to 1041 (GVSQ…NMEQ) and 1069 to 1084 (LPFT…QNPL). 2 stretches are compositionally biased toward pro residues: residues 1122 to 1132 (PLLPPPPPPQG) and 1168 to 1179 (HEPPPAMLPSPT). Residue Lys-1344 forms a Glycyl lysine isopeptide (Lys-Gly) (interchain with G-Cter in SUMO2) linkage.

This sequence belongs to the BCL9 family. In terms of assembly, found in a complex with CDC73; CTNNB1 and PYGO1. Interacts with CTNNB1. In terms of tissue distribution, expressed in breast, ductal and invasive ductal carcinomas of the breast, sporadic colorectal adenomas and carcinomas (at protein level). Expressed in fetal brain. Expressed in lung, amygdala, eye, prostate, pancreatic and prostate cancers, head and neck tumors and embryonal tumor.

It localises to the nucleus. Transcriptional regulator that acts as an activator. Promotes beta-catenin transcriptional activity. Plays a role in tumorigenesis. Enhances the neoplastic transforming activity of CTNNB1. The sequence is that of B-cell CLL/lymphoma 9-like protein (BCL9L) from Homo sapiens (Human).